The chain runs to 360 residues: DNA replication and repair protein RecF (360 aa).

33 to 40 (GENGSGKT) contacts ATP.

The protein belongs to the RecF family.

It localises to the cytoplasm. The RecF protein is involved in DNA metabolism; it is required for DNA replication and normal SOS inducibility. RecF binds preferentially to single-stranded, linear DNA. It also seems to bind ATP. In Rickettsia africae (strain ESF-5), this protein is DNA replication and repair protein RecF.